We begin with the raw amino-acid sequence, 197 residues long: Prefoldin subunit 3 (197 aa).

Residues 1 to 26 are disordered; it reads MASLALRGSSENPAPTKDTTTNPRGI. Residues 9–23 are compositionally biased toward polar residues; it reads SSENPAPTKDTTTNP.

It belongs to the prefoldin subunit alpha family. In terms of assembly, heterohexamer of two PFD-alpha type and four PFD-beta type subunits.

Its function is as follows. Prefoldin subunit; part of the gene cluster that mediates the biosynthesis of elsinochromes, pigments consisting of at least four interconvertible tautomers (A, B, C and D) that have a core phenolic quinone to which various side chains are attached and which play an important role in fungal pathogenesis. The non-reducing polyketide synthase PKS1 was proposed to iteratively catalyze decarboxylation between acetyl-CoA and malonyl-CoA subunits for polyketide chain elongation. The released polyketide undergoes cyclization to form an aromatic ring, and proceeds via serial modification steps to produce the heptaketide back- bone of elsinochrome. As elsinochrome has a symmetrical structure, two identical heptaketides are fused to form a core 1,2-dihydrobenzo-perylene ring structure, which can then be successively modified to produce the various derivatives of elsinochrome. Some of these reactions may be cooperatively carried out, at least in part, by the products of RDT1, OXR1 and PKS1. PRF1, embedded within the elsinochrome cluster possibly functions to stabilize some of the biosynthetic enzymes required for elsinochrome production. As prefoldin is a hexamer containing 2 a and 4 b subunits, additional prefoldin subunits, whose coding genes may not immediately link to the elsinochrome biosynthetic gene cluster, are required to fulfill the chaperone function. In addition, no methyltransferase-coding gene exists within the biosynthetic gene cluster, even though elsinochrome has four methyl groups at positions C3, C7, C8 and C12. Apparently, the identified gene cluster does not contain the entire entourage of genes responsible for elsinochrome biosynthesis. Once elsinochrome is synthesized, it must be exported outside the fungal cells, which is probably accomplished by the ECT1 transporter, to avoid toxicity. This Elsinoe fawcettii (Citrus scab fungus) protein is Prefoldin subunit 3.